We begin with the raw amino-acid sequence, 401 residues long: Dual-specificity RNA methyltransferase RlmN (401 aa).

The active-site Proton acceptor is the Glu-114. One can recognise a Radical SAM core domain in the interval Asp-120–Asp-365. An intrachain disulfide couples Cys-127 to Cys-370. Residues Cys-134, Cys-138, and Cys-141 each coordinate [4Fe-4S] cluster. Residues Gly-187–Glu-188, Ser-219, Ser-241–His-243, and Asn-327 each bind S-adenosyl-L-methionine. Residue Cys-370 is the S-methylcysteine intermediate of the active site.

The protein belongs to the radical SAM superfamily. RlmN family. It depends on [4Fe-4S] cluster as a cofactor.

The protein resides in the cytoplasm. The enzyme catalyses adenosine(2503) in 23S rRNA + 2 reduced [2Fe-2S]-[ferredoxin] + 2 S-adenosyl-L-methionine = 2-methyladenosine(2503) in 23S rRNA + 5'-deoxyadenosine + L-methionine + 2 oxidized [2Fe-2S]-[ferredoxin] + S-adenosyl-L-homocysteine. It catalyses the reaction adenosine(37) in tRNA + 2 reduced [2Fe-2S]-[ferredoxin] + 2 S-adenosyl-L-methionine = 2-methyladenosine(37) in tRNA + 5'-deoxyadenosine + L-methionine + 2 oxidized [2Fe-2S]-[ferredoxin] + S-adenosyl-L-homocysteine. Its function is as follows. Specifically methylates position 2 of adenine 2503 in 23S rRNA and position 2 of adenine 37 in tRNAs. m2A2503 modification seems to play a crucial role in the proofreading step occurring at the peptidyl transferase center and thus would serve to optimize ribosomal fidelity. This chain is Dual-specificity RNA methyltransferase RlmN, found in Xanthomonas campestris pv. campestris (strain B100).